The sequence spans 82 residues: Turripeptide Lol6.1 (82 aa).

Positions 1–23 are cleaved as a signal peptide; sequence MRFHWIPTLTVLLVLSMSFGTEA. A propeptide spanning residues 24 to 48 is cleaved from the precursor; it reads IPXXXXXXXXXXXXXXXXXXXXXXX. Intrachain disulfides connect Cys54/Cys66, Cys58/Cys71, and Cys65/Cys77.

In terms of tissue distribution, expressed by the venom duct.

It localises to the secreted. Acts as a neurotoxin by inhibiting an ion channel. This is Turripeptide Lol6.1 from Iotyrris olangoensis (Sea snail).